Reading from the N-terminus, the 373-residue chain is MNKFFVFPLLLILNSIVLVKSLTENLRVSRYSKPGVSTIILKGGYINRQFIGEISIGNPPQSFKVLFDTGSTNLWIPSKNCYAKACYNKKKYDYNISKNYRISSSKNPVNIFFGTGKVQIAYATDDIHLGSIKVRNQEFGIANYMSDDPFSDMQFDGLFGLGISEDIKRKGLIYDNIPRNSSRKNVFSIYYPKSVDDNGAITFGGYDKKYIEPNSNIDWFVVSSRKYWTIKMTGIKINGLFLEVCSGNIEGYCDAVIDTGTSSIAGPQNDLILLTKLLNPVKSCQNKTLLKNFSFVFSDENGVEKEYELTSNDYIVNSFKVDPILKNPCNFAFMPINISSPNGYLYILGQVFLQKYYAIFEKDNMRIGLAKSI.

The N-terminal stretch at 1–21 (MNKFFVFPLLLILNSIVLVKS) is a signal peptide. Residues 50 to 370 (FIGEISIGNP…EKDNMRIGLA (321 aa)) form the Peptidase A1 domain. Catalysis depends on residues Asp-68 and Asp-258.

This sequence belongs to the peptidase A1 family.

In terms of biological role, during the development in the mosquito vector, plays an essential role in sporozoite egress from the oocyst and sporozoite gliding motility, which is required for the invasion of salivary glands and subsequent transmission to the host. The polypeptide is Plasmepsin VIII (Plasmodium berghei (strain Anka)).